Reading from the N-terminus, the 142-residue chain is Large ribosomal subunit protein uL13 (142 aa).

The protein belongs to the universal ribosomal protein uL13 family. In terms of assembly, part of the 50S ribosomal subunit.

This protein is one of the early assembly proteins of the 50S ribosomal subunit, although it is not seen to bind rRNA by itself. It is important during the early stages of 50S assembly. The sequence is that of Large ribosomal subunit protein uL13 from Pectobacterium carotovorum subsp. carotovorum (strain PC1).